A 566-amino-acid chain; its full sequence is Osteoclast stimulatory transmembrane protein (566 aa).

The Cytoplasmic portion of the chain corresponds to 1–51 (MPGHPGAAEQLVKTGWRSWHLGFWKALAPLQAAWDAFSQPVPASCGQLLTQ). A helical membrane pass occupies residues 52 to 72 (LLLCASLAAAAAGLVYHWLAS). The Extracellular portion of the chain corresponds to 73 to 81 (LLLYPPGPS). A helical transmembrane segment spans residues 82-102 (AMVATVCGLLVFLSLGLVPPV). At 103–128 (RCLFALSVPTLGMEQGRRLLLSYSTA) the chain is on the cytoplasmic side. The chain crosses the membrane as a helical span at residues 129 to 149 (TLAIAVVPNVLANVGAAGQVL). Residues 150 to 227 (RCVTEGSLES…ARAAALGTQR (78 aa)) lie on the Extracellular side of the membrane. Residues 228 to 248 (VVTGLFMLGLLVESAWYLHCY) form a helical membrane-spanning segment. Residues 249–304 (LTDLRFDNIYATQQLTQRLAQAQATHLLAPPPTWLLQAAQLRLSQEELLSCLLRLG) are Cytoplasmic-facing. Residues 305–325 (LLALLLVATAVAVATDHVAFL) form a helical membrane-spanning segment. The Extracellular portion of the chain corresponds to 326 to 398 (LAQATVDWAQ…CPLLPARRPR (73 aa)). The chain crosses the membrane as a helical span at residues 399–419 (AAAPLAAGALQLLAGSTVLLE). Over 420-566 (AYARRLRHAI…EGNTGHDRPG (147 aa)) the chain is Cytoplasmic.

The protein localises to the membrane. Probable cell surface receptor that plays a role in cellular fusion and cell differentiation. Cooperates with DCSTAMP in modulating cell-cell fusion in both osteoclasts and foreign body giant cells (FBGCs). Involved in osteoclast bone resorption. Promotes osteoclast differentiation and may play a role in the multinucleated osteoclast maturation. The polypeptide is Osteoclast stimulatory transmembrane protein (OCSTAMP) (Homo sapiens (Human)).